A 361-amino-acid chain; its full sequence is Ribosomal RNA large subunit methyltransferase M (361 aa).

Residues S187, 220–223 (CPGG), D239, D259, and D276 contribute to the S-adenosyl-L-methionine site. The active-site Proton acceptor is the K305.

This sequence belongs to the class I-like SAM-binding methyltransferase superfamily. RNA methyltransferase RlmE family. RlmM subfamily. In terms of assembly, monomer.

Its subcellular location is the cytoplasm. It carries out the reaction cytidine(2498) in 23S rRNA + S-adenosyl-L-methionine = 2'-O-methylcytidine(2498) in 23S rRNA + S-adenosyl-L-homocysteine + H(+). Its function is as follows. Catalyzes the 2'-O-methylation at nucleotide C2498 in 23S rRNA. This Shewanella baltica (strain OS185) protein is Ribosomal RNA large subunit methyltransferase M.